The following is a 270-amino-acid chain: Glucosamine-6-phosphate deaminase (270 aa).

Aspartate 72 functions as the Proton acceptor; for enolization step in the catalytic mechanism. Catalysis depends on aspartate 141, which acts as the For ring-opening step. Catalysis depends on histidine 143, which acts as the Proton acceptor; for ring-opening step. Glutamate 148 functions as the For ring-opening step in the catalytic mechanism.

The protein belongs to the glucosamine/galactosamine-6-phosphate isomerase family. NagB subfamily. Homohexamer.

The enzyme catalyses alpha-D-glucosamine 6-phosphate + H2O = beta-D-fructose 6-phosphate + NH4(+). It functions in the pathway amino-sugar metabolism; N-acetylneuraminate degradation; D-fructose 6-phosphate from N-acetylneuraminate: step 5/5. With respect to regulation, allosterically activated by N-acetylglucosamine 6-phosphate (GlcNAc6P). Catalyzes the reversible isomerization-deamination of glucosamine 6-phosphate (GlcN6P) to form fructose 6-phosphate (Fru6P) and ammonium ion. The chain is Glucosamine-6-phosphate deaminase from Haemophilus influenzae (strain 86-028NP).